The following is a 124-amino-acid chain: uncharacterized protein (124 aa).

Positions 44 to 92 are disordered; sequence DRVENSGNGTGSISAPLTDLGPSIGDSHENKGADIPIHPPLDTQSHAKD. Residues 48 to 58 show a composition bias toward polar residues; it reads NSGNGTGSISA.

This is an uncharacterized protein from Caenorhabditis elegans.